A 367-amino-acid polypeptide reads, in one-letter code: MSLSDQVLAVNDDLPIRTDKPVHSGKVRSVYWLTEEDSRRLIKEKGYNVAPDAPLAIMVISDRISAFDCIWRGEGDLKGIPGKGAALNAISNHWFQLFKDNGLADSHILDIPHPFVWIVQKAKPVMIEAICRQYITGSMWRAYTQGEREFCGITLPERLEKDEQLAELLLTPSTKGILKGIDGVPEVDDVNITRKNIEDNYDKFNFSCVEDIATYEKLLKEGFAVIAKALTKIDQIFVDTKFEFGYVEDAQGNEKLIYMDEVGTPDSSRIWDTKAYRSGHIIENSKEGFRQFLLNHFPDPDILLNKNRMEERFALAKENALPLEAMMDLSKTYLDIAAKITGAPITLSDNPKAEIIKVLKEEYQLVD.

Belongs to the SAICAR synthetase family.

It carries out the reaction 5-amino-1-(5-phospho-D-ribosyl)imidazole-4-carboxylate + L-aspartate + ATP = (2S)-2-[5-amino-1-(5-phospho-beta-D-ribosyl)imidazole-4-carboxamido]succinate + ADP + phosphate + 2 H(+). Its pathway is purine metabolism; IMP biosynthesis via de novo pathway; 5-amino-1-(5-phospho-D-ribosyl)imidazole-4-carboxamide from 5-amino-1-(5-phospho-D-ribosyl)imidazole-4-carboxylate: step 1/2. This is Phosphoribosylaminoimidazole-succinocarboxamide synthase from Aliivibrio fischeri (strain MJ11) (Vibrio fischeri).